An 81-amino-acid chain; its full sequence is MAKKSTEKTELDFENTLQQLEAIVTRLESGELPLESALEEFERGIKLAHLGQERLQQAEQRIQILLQKSDSAKLSDYQAEE.

It belongs to the XseB family. As to quaternary structure, heterooligomer composed of large and small subunits.

The protein localises to the cytoplasm. The catalysed reaction is Exonucleolytic cleavage in either 5'- to 3'- or 3'- to 5'-direction to yield nucleoside 5'-phosphates.. Functionally, bidirectionally degrades single-stranded DNA into large acid-insoluble oligonucleotides, which are then degraded further into small acid-soluble oligonucleotides. In Pasteurella multocida (strain Pm70), this protein is Exodeoxyribonuclease 7 small subunit.